Consider the following 7182-residue polypeptide: Replicase polyprotein 1ab (7182 aa).

Residues 25-151 (RTDHVSLKAS…EFQFLLRKKG (127 aa)) enclose the CoV Nsp1 globular domain. The BetaCoV Nsp1 C-terminal domain occupies 159-195 (DAPWDYNWTPYSDLMDALEADPCGKYSQSLLKKLVGG). The CoV Nsp2 N-terminal domain maps to 197-473 (FTPIDQYMCG…WSKVCETANL (277 aa)). Zn(2+)-binding residues include Cys-340, Cys-343, Cys-359, and Cys-361. The interval 340 to 361 (CTSCGKGSWLTGNAVQGFACDC) is C4. Residues 479–713 (QHAINFVNEF…MHILSKAMQL (235 aa)) form the CoV Nsp2 middle domain. The CoV Nsp2 C-terminal domain occupies 715–851 (HTTVSWAGSK…VPTLFRLKGG (137 aa)). Residues 855-964 (KGVKFGGEQT…MTFSVNPVEE (110 aa)) form the Ubiquitin-like 1 domain. Macro domains follow at residues 1186–1345 (PLKN…KVYN) and 1354–1480 (TGLT…AVQT). One can recognise a DPUP domain in the interval 1480–1553 (TPEQSFINTV…LEKCRTYLTS (74 aa)). The Ubiquitin-like 2 domain occupies 1558 to 1613 (QKNVDVLVTIDGVNFRTVVLNNTTTYRVQLGSVFYKGSDISDTIPTEKMSGEAVYL). The Peptidase C16 domain maps to 1628 to 1902 (VYGTADTAFL…WADVDPDLSA (275 aa)). Cys-1668 (for PL-PRO activity) is an active-site residue. 4 residues coordinate Zn(2+): Cys-1748, Cys-1751, Cys-1783, and Cys-1785. The segment at 1748–1785 (CNVCGVQDTTTTGLKACIYVGMNSLDELHATHEECCQC) adopts a C4-type zinc-finger fold. Residues His-1838 and Asp-1853 each act as for PL-PRO activity in the active site. Positions 1916–2033 (VIEYSPATIL…QVYDIAPVTL (118 aa)) constitute a Nucleic acid-binding domain. The G2M domain occupies 2059–2179 (PQSPVQVAED…ASVTVNVTTA (121 aa)). The next 3 membrane-spanning stretches (helical) occupy residues 2158 to 2178 (ILLG…NVTT), 2196 to 2216 (GIIG…FTFW), and 2268 to 2288 (LLFL…LFLF). The tract at residues 2158-2441 (ILLGASSLFA…VTHIPLLGLV (284 aa)) is HD1. The 3Ecto domain occupies 2305-2371 (LATYRELRSY…FQMIQTHVTS (67 aa)). 2 disulfides stabilise this stretch: Cys-2321–Cys-2349 and Cys-2339–Cys-2346. The next 3 membrane-spanning stretches (helical) occupy residues 2372–2392 (YVIN…YVLY), 2396–2416 (FNVL…GAFV), and 2421–2441 (YNYL…LGLV). A Y1 region spans residues 2455–2545 (RFYNHVINGC…SLRRLVKPTD (91 aa)). The CoV Nsp3 Y domain occupies 2455–2828 (RFYNHVINGC…LSVKFSATKL (374 aa)). Positions 2459, 2464, 2469, 2472, 2505, 2508, 2512, and 2515 each coordinate Zn(2+). Residues 2459–2472 (HVINGCKDTACLLC) are ZF1. The tract at residues 2505–2515 (CCRHNWNCVDC) is ZF2. A Y2 region spans residues 2546-2644 (KSHYYVESVT…LVDSNMVTTV (99 aa)). A coV-Y region spans residues 2546–2828 (KSHYYVESVT…LSVKFSATKL (283 aa)). Residues 2645–2727 (GDSREIASKM…DALQYAYKHD (83 aa)) form a Y3 region. Residues 2728-2828 (LQLTTEGFNN…LSVKFSATKL (101 aa)) form a Y4 region. 4 helical membrane-spanning segments follow: residues 2848-2868 (CVVT…LPAF), 3119-3139 (STSL…FYYV), 3152-3172 (CAVV…FVVS), and 3203-3223 (WFVM…IVGV). Positions 2848–3223 (CVVTLVVFAM…WMVFAYIVGV (376 aa)) are HD2. The 97-residue stretch at 3242-3338 (VFTDGKLNCS…NCSVTSSVLQ (97 aa)) folds into the Nsp4C domain. The region spanning 3339–3644 (SGLVKMAAPS…NMQVMGVVMQ (306 aa)) is the Peptidase C30 domain. Residues His-3379 and Cys-3486 each act as for 3CL-PRO activity in the active site. The next 7 helical transmembrane spans lie at 3650-3670 (ISYG…VATL), 3684-3704 (VIPL…MLTV), 3709-3729 (TFLT…NIVY), 3760-3777 (LGVY…VRRL), 3782-3802 (ASNL…YTTG), 3823-3843 (VTVF…FLYA), and 3855-3875 (LVLL…GVFS). The tract at residues 3650–3875 (ISYGLVHWLF…FCTVYFGVFS (226 aa)) is HD3. In terms of domain architecture, RdRp Nsp7 cofactor spans 3937–4019 (SKLTDLKCTS…DLLDHPSVLQ (83 aa)). Residues 4020–4218 (ATLSEFSHLA…RAASSAVTLQ (199 aa)) form the RdRp Nsp8 cofactor domain. Positions 4219-4328 (NNEIRPSGLK…GHIAATVRLQ (110 aa)) constitute a Nsp9 ssRNA-binding domain. In terms of domain architecture, ExoN/MTase coactivator spans 4329–4467 (AGSNTEFAIN…DALRGTTIPQ (139 aa)). Residues Cys-4402, Cys-4405, His-4411, Cys-4418, Cys-4444, Cys-4447, Cys-4455, and Cys-4457 each contribute to the Zn(2+) site. Zinc fingers lie at residues 4402–4418 (CLYC…TGVC) and 4444–4457 (CNVC…GCNC). Residues 4473–4730 (FLNRVRGSIV…AAETHRDCDL (258 aa)) form the NiRAN domain. Mn(2+) contacts are provided by Asn-4678 and Asp-4687. The Nsp12 Interface domain maps to 4735-4833 (IEWPLLEYDY…MNMDVSLHRH (99 aa)). The Zn(2+) site is built by His-4764, Cys-4770, Cys-4775, Cys-4779, and Cys-4956. The Nsp12 RNA-dependent RNA polymerase domain occupies 4834–5401 (RLSLKELMMY…DLYTAPTTLQ (568 aa)). The tract at residues 4836-5050 (SLKELMMYAA…HQKMLKSMAA (215 aa)) is rdRp Fingers N-ter. The interval 5051-5089 (TRGSTCVIGTTKFYGGWDFMLKTLYKDVDNPHLMGWDYP) is rdRp Palm N-ter. In terms of domain architecture, RdRp catalytic spans 5081-5243 (PHLMGWDYPK…CYNSDYATKG (163 aa)). The segment at 5090 to 5148 (KCDRAMPNMCRIFASLILARKHSTCCTNTDRFYRLANECAQVLSEYVLCGGGYYVKPGG) is rdRp Fingers C-ter. 3 residues coordinate Zn(2+): His-5111, Cys-5114, and Cys-5115. The interval 5149 to 5284 (TSSGDATTAY…KKGPHEFCSQ (136 aa)) is rdRp Palm C-ter. Catalysis depends on residues Ser-5228, Asp-5229, and Asp-5230. The tract at residues 5285 to 5401 (HTLFIKDGDD…DLYTAPTTLQ (117 aa)) is rdRp Thumb. In terms of domain architecture, CV ZBD spans 5402–5514 (AVGSCVVCHS…TEFNRLATCD (113 aa)). Zn(2+) is bound by residues Cys-5406, Cys-5409, Cys-5417, Cys-5420, Cys-5427, Cys-5430, His-5434, His-5440, Cys-5451, Cys-5456, Cys-5473, and His-5476. The region spanning 5658-5839 (TVPEEFANHV…MCNLGPDIFL (182 aa)) is the (+)RNA virus helicase ATP-binding domain. ATP is bound at residue 5683–5690 (GPPGTGKS). A (+)RNA virus helicase C-terminal domain is found at 5840 to 6014 (SVCYRCPEEI…GLYKDCSRES (175 aa)). In terms of domain architecture, ExoN spans 6071–6286 (LFITRDEAIR…RCLAIHDCFI (216 aa)). Active-site residues include Asp-6089, Glu-6091, and Glu-6190. Residues Cys-6206, Cys-6209, Cys-6225, His-6228, His-6256, Cys-6260, and His-6263 each coordinate Zn(2+). Residues His-6267 and Asp-6272 contribute to the active site. Cys-6278 lines the Zn(2+) pocket. One can recognise an N7-MTase domain in the interval 6295–6523 (YPYISHEKRL…NLWSTFTKIQ (229 aa)). S-adenosyl-L-methionine is bound at residue 6330–6336 (DIGNPKG). Residues 6409–6423 (CDGGSLYVNKHAFHT) form a gpppA-binding region. Zn(2+) is bound by residues Cys-6447, Cys-6469, Cys-6480, and His-6483. Residues 6524–6584 (GLENIAYNVI…NIAFELYAKR (61 aa)) enclose the Nsp15 N-terminal oligomerization domain. The region spanning 6585-6715 (AVRSHPDFNL…IYKKVNNEFV (131 aa)) is the AV-Nsp11N/CoV-Nsp15M domain. Residues 6732 to 6871 (TPVSEMEKDF…KDGQVQTFYP (140 aa)) form the NendoU domain. Active-site residues include His-6762, His-6777, Lys-6817, Lys-6920, Asp-7004, Lys-7044, and Glu-7077. One can recognise a Nidovirus-type SAM-dependent 2'-O-MTase domain in the interval 6876–7170 (INDWKPGLAM…TLSVSTDVLV (295 aa)).

It belongs to the coronaviruses polyprotein 1ab family. Interacts with host PHB and PHB2. As to quaternary structure, interacts with papain-like protease nsp3 and non-structural protein 6. In terms of assembly, monomer. Homodimer. Only the homodimer shows catalytic activity. Interacts with nsp8 and nsp12 to form the replication-transcription complex (RTC): nsp12, nsp7, two subunits of nsp8, and up to two subunits of nsp13. As to quaternary structure, interacts with nsp7, nsp13 and nsp12 to form the replication-transcription complex (RTC): nsp12, nsp7, two subunits of nsp8, and up to two subunits of nsp13. In terms of assembly, interacts with nsp12. Interacts with proofreading exoribonuclease nsp14 and 2'-O-methyltransferase nsp16; these interactions enhance nsp14 and nsp16 enzymatic activities. As to quaternary structure, interacts with nsp7 and nsp8 to form the replication-transcription complex (RTC): nsp12, nsp7, two subunits of nsp8, and up to two subunits of nsp13. Interacts with nsp9. In terms of assembly, interacts with nsp8 to form the replication-transcription complex (RTC): nsp12, nsp7, two subunits of nsp8, and up to two subunits of nsp13. It depends on Mn(2+) as a cofactor. Mg(2+) is required as a cofactor. In terms of processing, specific enzymatic cleavages in vivo by its own proteases yield mature proteins. 3CL-PRO and PL-PRO proteinases are autocatalytically processed.

Its subcellular location is the host membrane. It is found in the host cytoplasm. It localises to the host perinuclear region. The protein localises to the host endoplasmic reticulum-Golgi intermediate compartment. The catalysed reaction is RNA(n) + a ribonucleoside 5'-triphosphate = RNA(n+1) + diphosphate. It carries out the reaction ATP + H2O = ADP + phosphate + H(+). The enzyme catalyses Thiol-dependent hydrolysis of ester, thioester, amide, peptide and isopeptide bonds formed by the C-terminal Gly of ubiquitin (a 76-residue protein attached to proteins as an intracellular targeting signal).. It catalyses the reaction a 5'-end (N(7)-methyl 5'-triphosphoguanosine)-ribonucleoside in mRNA + S-adenosyl-L-methionine = a 5'-end (N(7)-methyl 5'-triphosphoguanosine)-(2'-O-methyl-ribonucleoside) in mRNA + S-adenosyl-L-homocysteine + H(+). The catalysed reaction is uridylyl-uridylyl-ribonucleotide-RNA = a 3'-end uridylyl-2',3'-cyclophospho-uridine-RNA + a 5'-end dephospho-ribonucleoside-RNA. It carries out the reaction a 5'-end diphospho-ribonucleoside in mRNA + GTP + H(+) = a 5'-end (5'-triphosphoguanosine)-ribonucleoside in mRNA + diphosphate. The enzyme catalyses a 5'-end (5'-triphosphoguanosine)-ribonucleoside in mRNA + S-adenosyl-L-methionine = a 5'-end (N(7)-methyl 5'-triphosphoguanosine)-ribonucleoside in mRNA + S-adenosyl-L-homocysteine. The replicase polyprotein of coronaviruses is a multifunctional protein: it contains the activities necessary for the transcription of negative stranded RNA, leader RNA, subgenomic mRNAs and progeny virion RNA as well as proteinases responsible for the cleavage of the polyprotein into functional products. Functionally, inhibits host translation by interacting with the 40S ribosomal subunit. The nsp1-40S ribosome complex further induces an endonucleolytic cleavage near the 5'UTR of host mRNAs, targeting them for degradation. Viral mRNAs are not susceptible to nsp1-mediated endonucleolytic RNA cleavage thanks to the presence of a 5'-end leader sequence and are therefore protected from degradation. By suppressing host gene expression, nsp1 facilitates efficient viral gene expression in infected cells and evasion from host immune response. Its function is as follows. May play a role in the modulation of host cell survival signaling pathway by interacting with host PHB and PHB2. Indeed, these two proteins play a role in maintaining the functional integrity of the mitochondria and protecting cells from various stresses. In terms of biological role, responsible for the cleavages located at the N-terminus of the replicase polyprotein. In addition, PL-PRO possesses a deubiquitinating/deISGylating activity and processes both 'Lys-48'- and 'Lys-63'-linked polyubiquitin chains from cellular substrates. Participates together with nsp4 in the assembly of virally-induced cytoplasmic double-membrane vesicles necessary for viral replication. Antagonizes innate immune induction of type I interferon by blocking the phosphorylation, dimerization and subsequent nuclear translocation of host IRF3. Also prevents host NF-kappa-B signaling. Participates in the assembly of virally-induced cytoplasmic double-membrane vesicles necessary for viral replication. Functionally, cleaves the C-terminus of replicase polyprotein at 11 sites. Recognizes substrates containing the core sequence [ILMVF]-Q-|-[SGACN]. Also able to bind an ADP-ribose-1''-phosphate (ADRP). Its function is as follows. Plays a role in the initial induction of autophagosomes from host endoplasmic reticulum. Later, limits the expansion of these phagosomes that are no longer able to deliver viral components to lysosomes. In terms of biological role, forms a hexadecamer with nsp8 (8 subunits of each) that may participate in viral replication by acting as a primase. Alternatively, may synthesize substantially longer products than oligonucleotide primers. Forms a hexadecamer with nsp7 (8 subunits of each) that may participate in viral replication by acting as a primase. Alternatively, may synthesize substantially longer products than oligonucleotide primers. Functionally, forms a primer, NSP9-pU, which is utilized by the polymerase for the initiation of RNA chains. Interacts with ribosome signal recognition particle RNA (SRP). Together with NSP8, suppress protein integration into the cell membrane, thereby disrupting host immune defenses. Its function is as follows. Plays a pivotal role in viral transcription by stimulating both nsp14 3'-5' exoribonuclease and nsp16 2'-O-methyltransferase activities. Therefore plays an essential role in viral mRNAs cap methylation. In terms of biological role, RNA-directed RNA polymerase that catalyzes the transcription of viral genomic and subgenomic RNAs. Acts in complex with nsp7 and nsp8 to transcribe both the minus and positive strands of genomic RNA. The kinase-like NiRAN domain of NSP12 attaches one or more nucleotides to the amino terminus of NSP9, forming a covalent RNA-protein intermediate that serves as transcription/replication primer. Subgenomic RNAs (sgRNAs) are formed by discontinuous transcription: The polymerase has the ability to pause at transcription-regulating sequences (TRS) and jump to the leader TRS, resulting in a major deletion. This creates a series of subgenomic RNAs that are replicated, transcribed and translated. In addition, Nsp12 is a subunit of the viral RNA capping enzyme that catalyzes the RNA guanylyltransferase reaction for genomic and sub-genomic RNAs. Subsequently, the NiRAN domain transfers RNA to GDP, and forms the core cap structure GpppA-RNA. Multi-functional protein with a zinc-binding domain in N-terminus displaying RNA and DNA duplex-unwinding activities with 5' to 3' polarity. Activity of helicase is dependent on magnesium. Functionally, plays a role in viral RNA synthesis through two distinct activities. The N7-guanine methyltransferase activity plays a role in the formation of the cap structure GpppA-RNA. The proofreading exoribonuclease reduces the sensitivity of the virus to RNA mutagens during replication. This activity acts on both ssRNA and dsRNA in a 3'-5' direction. Its function is as follows. Plays a role in viral transcription/replication and prevents the simultaneous activation of host cell dsRNA sensors, such as MDA5/IFIH1, OAS, and PKR. Acts by degrading the 5'-polyuridines generated during replication of the poly(A) region of viral genomic and subgenomic RNAs. Catalyzes a two-step reaction in which a 2'3'-cyclic phosphate (2'3'-cP) is first generated by 2'-O transesterification, which is then hydrolyzed to a 3'-phosphate (3'-P). If not degraded, poly(U) RNA would hybridize with poly(A) RNA tails and activate host dsRNA sensors. In terms of biological role, methyltransferase that mediates mRNA cap 2'-O-ribose methylation to the 5'-cap structure of viral mRNAs. N7-methyl guanosine cap is a prerequisite for binding of nsp16. Therefore plays an essential role in viral mRNAs cap methylation which is essential to evade immune system. This Pipistrellus abramus (Japanese pipistrelle) protein is Replicase polyprotein 1ab (rep).